The sequence spans 162 residues: NADH-quinone oxidoreductase subunit C (162 aa).

The protein belongs to the complex I 30 kDa subunit family. NDH-1 is composed of 14 different subunits. Subunits NuoB, C, D, E, F, and G constitute the peripheral sector of the complex.

Its subcellular location is the cell inner membrane. The catalysed reaction is a quinone + NADH + 5 H(+)(in) = a quinol + NAD(+) + 4 H(+)(out). Its function is as follows. NDH-1 shuttles electrons from NADH, via FMN and iron-sulfur (Fe-S) centers, to quinones in the respiratory chain. The immediate electron acceptor for the enzyme in this species is believed to be ubiquinone. Couples the redox reaction to proton translocation (for every two electrons transferred, four hydrogen ions are translocated across the cytoplasmic membrane), and thus conserves the redox energy in a proton gradient. This is NADH-quinone oxidoreductase subunit C from Trichlorobacter lovleyi (strain ATCC BAA-1151 / DSM 17278 / SZ) (Geobacter lovleyi).